A 695-amino-acid chain; its full sequence is U1 snRNP-associated protein usp107 (695 aa).

The span at Arg85–Asn96 shows a compositional bias: basic and acidic residues. Residues Arg85–Ser134 are disordered. The span at Pro98 to Gln113 shows a compositional bias: polar residues. In terms of domain architecture, RRM spans Arg139–Asp221. Positions Asp265–Arg369 form a coiled coil. Basic and acidic residues-rich tracts occupy residues Glu487–Gly506 and Ser548–Leu561. Disordered stretches follow at residues Glu487–Ala509 and Gln540–Thr590. The PWI domain maps to Glu605 to Ala695.

In terms of assembly, component of the U1 snRNP particle, a subcomplex of the spliceosome. Interacts with prp5 and usp102.

Its subcellular location is the cytoplasm. The protein resides in the nucleus. Functionally, component of the U1 snRNP particle, which recognizes and binds the 5'-splice site of pre-mRNA. Together with other non-snRNP factors, U1 snRNP forms the spliceosomal commitment complex, that targets pre-mRNA to the splicing pathway. The protein is U1 snRNP-associated protein usp107 (usp107) of Schizosaccharomyces pombe (strain 972 / ATCC 24843) (Fission yeast).